Reading from the N-terminus, the 430-residue chain is UDP-N-acetylglucosamine 1-carboxyvinyltransferase (430 aa).

Residue 22 to 23 (KN) participates in phosphoenolpyruvate binding. Arg102 contributes to the UDP-N-acetyl-alpha-D-glucosamine binding site. Cys126 (proton donor) is an active-site residue. Residue Cys126 is modified to 2-(S-cysteinyl)pyruvic acid O-phosphothioketal. UDP-N-acetyl-alpha-D-glucosamine-binding positions include 131-135 (RPVDL), 172-175 (KVSV), Asp317, and Ile339.

This sequence belongs to the EPSP synthase family. MurA subfamily.

Its subcellular location is the cytoplasm. The catalysed reaction is phosphoenolpyruvate + UDP-N-acetyl-alpha-D-glucosamine = UDP-N-acetyl-3-O-(1-carboxyvinyl)-alpha-D-glucosamine + phosphate. Its pathway is cell wall biogenesis; peptidoglycan biosynthesis. Functionally, cell wall formation. Adds enolpyruvyl to UDP-N-acetylglucosamine. In Agrobacterium fabrum (strain C58 / ATCC 33970) (Agrobacterium tumefaciens (strain C58)), this protein is UDP-N-acetylglucosamine 1-carboxyvinyltransferase.